Here is a 152-residue protein sequence, read N- to C-terminus: uncharacterized protein (152 aa).

This sequence belongs to the IIV-6 145L family.

This is an uncharacterized protein from Invertebrate iridescent virus 3 (IIV-3).